The chain runs to 132 residues: Pro-MCH 1 (132 aa).

Residues 1-24 (MRHYVLSISFAVALFLECYTPSTA) form the signal peptide. A disulfide bridge connects residues Cys-120 and Cys-129.

It belongs to the melanin-concentrating hormone family. In terms of tissue distribution, pituitary gland. Produced in neurons of lateral basal hypothalamus which project both to the brain and to the neural lobe of the pituitary gland from where MCH is released.

Functionally, plays a role in skin pigmentation by antagonizing the action of melanotropin alpha. Induces melanin concentration within the melanophores. May participate in the control of the hypothalamo-pituitary adrenal gland axis by inhibiting the release of ACTH. The chain is Pro-MCH 1 (mch1) from Oncorhynchus keta (Chum salmon).